The chain runs to 118 residues: Ribonuclease P protein component (118 aa).

This sequence belongs to the RnpA family. As to quaternary structure, consists of a catalytic RNA component (M1 or rnpB) and a protein subunit.

It catalyses the reaction Endonucleolytic cleavage of RNA, removing 5'-extranucleotides from tRNA precursor.. Functionally, RNaseP catalyzes the removal of the 5'-leader sequence from pre-tRNA to produce the mature 5'-terminus. It can also cleave other RNA substrates such as 4.5S RNA. The protein component plays an auxiliary but essential role in vivo by binding to the 5'-leader sequence and broadening the substrate specificity of the ribozyme. This chain is Ribonuclease P protein component, found in Petrotoga mobilis (strain DSM 10674 / SJ95).